We begin with the raw amino-acid sequence, 75 residues long: UPF0352 protein YejL (75 aa).

Belongs to the UPF0352 family.

In Shigella sonnei (strain Ss046), this protein is UPF0352 protein YejL.